The chain runs to 528 residues: Alpha-amylase (528 aa).

Residues 1-28 (MNKKWLNIPALIALLAAIAFGSVAPAEA) form the signal peptide. Positions 168 and 228 each coordinate Ca(2+). The Nucleophile role is filled by Asp258. A Ca(2+)-binding site is contributed by His262. Catalysis depends on Glu286, which acts as the Proton donor.

Belongs to the glycosyl hydrolase 13 family. In terms of assembly, monomer. Requires Ca(2+) as cofactor.

The catalysed reaction is Endohydrolysis of (1-&gt;4)-alpha-D-glucosidic linkages in polysaccharides containing three or more (1-&gt;4)-alpha-linked D-glucose units.. In Niallia circulans (Bacillus circulans), this protein is Alpha-amylase.